The chain runs to 156 residues: MNLNATILGQAIAFILFVWFCMKYVWPPLMAAIEKRQKEIADGLASAERAHKDLDLAKASATDQLKKAKAEAQVIIEQANKRRAQILDEAKTEAEQERTKIVAQAQAEIEAERKRAREELRKQVAILAVAGAEKIIERSVDEAANSDIVDKLVAEL.

The chain crosses the membrane as a helical span at residues A11–A31.

This sequence belongs to the ATPase B chain family. As to quaternary structure, F-type ATPases have 2 components, F(1) - the catalytic core - and F(0) - the membrane proton channel. F(1) has five subunits: alpha(3), beta(3), gamma(1), delta(1), epsilon(1). F(0) has three main subunits: a(1), b(2) and c(10-14). The alpha and beta chains form an alternating ring which encloses part of the gamma chain. F(1) is attached to F(0) by a central stalk formed by the gamma and epsilon chains, while a peripheral stalk is formed by the delta and b chains.

Its subcellular location is the cell inner membrane. In terms of biological role, f(1)F(0) ATP synthase produces ATP from ADP in the presence of a proton or sodium gradient. F-type ATPases consist of two structural domains, F(1) containing the extramembraneous catalytic core and F(0) containing the membrane proton channel, linked together by a central stalk and a peripheral stalk. During catalysis, ATP synthesis in the catalytic domain of F(1) is coupled via a rotary mechanism of the central stalk subunits to proton translocation. Component of the F(0) channel, it forms part of the peripheral stalk, linking F(1) to F(0). In Salmonella agona (strain SL483), this protein is ATP synthase subunit b.